The following is a 341-amino-acid chain: HTH-type transcriptional repressor PurR (341 aa).

In terms of domain architecture, HTH lacI-type spans 2 to 56 (ATIKDVAKRAGVSTTTVSHVINKTRFVAEETKAAVRAAIKELHYSPSAVARSLKV). Positions 4 to 23 (IKDVAKRAGVSTTTVSHVIN) form a DNA-binding region, H-T-H motif. The DNA-binding element occupies 48 to 56 (SAVARSLKV). Hypoxanthine contacts are provided by Y73, R190, T192, F221, and D275.

In terms of assembly, homodimer.

Its pathway is purine metabolism; purine nucleotide biosynthesis [regulation]. Is the main repressor of the genes involved in the de novo synthesis of purine nucleotides, regulating purB, purC, purEK, purF, purHD, purL, purMN and guaBA expression. PurR is allosterically activated to bind its cognate DNA by binding the purine corepressors, hypoxanthine or guanine, thereby effecting transcription repression. This chain is HTH-type transcriptional repressor PurR, found in Pectobacterium carotovorum subsp. carotovorum (strain PC1).